A 329-amino-acid polypeptide reads, in one-letter code: 4-hydroxy-3-methylbut-2-enyl diphosphate reductase 1 (329 aa).

Position 29 (cysteine 29) interacts with [4Fe-4S] cluster. Histidine 58 and histidine 95 together coordinate (2E)-4-hydroxy-3-methylbut-2-enyl diphosphate. Residues histidine 58 and histidine 95 each contribute to the dimethylallyl diphosphate site. Positions 58 and 95 each coordinate isopentenyl diphosphate. Residue cysteine 117 coordinates [4Fe-4S] cluster. Histidine 145 contacts (2E)-4-hydroxy-3-methylbut-2-enyl diphosphate. Histidine 145 serves as a coordination point for dimethylallyl diphosphate. Histidine 145 contacts isopentenyl diphosphate. The Proton donor role is filled by glutamate 147. Threonine 185 serves as a coordination point for (2E)-4-hydroxy-3-methylbut-2-enyl diphosphate. Cysteine 215 serves as a coordination point for [4Fe-4S] cluster. (2E)-4-hydroxy-3-methylbut-2-enyl diphosphate-binding residues include serine 243, serine 244, asparagine 245, and serine 287. Residues serine 243, serine 244, asparagine 245, and serine 287 each coordinate dimethylallyl diphosphate. 4 residues coordinate isopentenyl diphosphate: serine 243, serine 244, asparagine 245, and serine 287.

The protein belongs to the IspH family. It depends on [4Fe-4S] cluster as a cofactor.

The catalysed reaction is isopentenyl diphosphate + 2 oxidized [2Fe-2S]-[ferredoxin] + H2O = (2E)-4-hydroxy-3-methylbut-2-enyl diphosphate + 2 reduced [2Fe-2S]-[ferredoxin] + 2 H(+). The enzyme catalyses dimethylallyl diphosphate + 2 oxidized [2Fe-2S]-[ferredoxin] + H2O = (2E)-4-hydroxy-3-methylbut-2-enyl diphosphate + 2 reduced [2Fe-2S]-[ferredoxin] + 2 H(+). It participates in isoprenoid biosynthesis; dimethylallyl diphosphate biosynthesis; dimethylallyl diphosphate from (2E)-4-hydroxy-3-methylbutenyl diphosphate: step 1/1. The protein operates within isoprenoid biosynthesis; isopentenyl diphosphate biosynthesis via DXP pathway; isopentenyl diphosphate from 1-deoxy-D-xylulose 5-phosphate: step 6/6. In terms of biological role, catalyzes the conversion of 1-hydroxy-2-methyl-2-(E)-butenyl 4-diphosphate (HMBPP) into a mixture of isopentenyl diphosphate (IPP) and dimethylallyl diphosphate (DMAPP). Acts in the terminal step of the DOXP/MEP pathway for isoprenoid precursor biosynthesis. The sequence is that of 4-hydroxy-3-methylbut-2-enyl diphosphate reductase 1 from Mycobacterium tuberculosis (strain CDC 1551 / Oshkosh).